Here is a 123-residue protein sequence, read N- to C-terminus: Large ribosomal subunit protein eL8 (123 aa).

It belongs to the eukaryotic ribosomal protein eL8 family. As to quaternary structure, part of the 50S ribosomal subunit. Probably part of the RNase P complex.

The protein localises to the cytoplasm. Its function is as follows. Multifunctional RNA-binding protein that recognizes the K-turn motif in ribosomal RNA, the RNA component of RNase P, box H/ACA, box C/D and box C'/D' sRNAs. The polypeptide is Large ribosomal subunit protein eL8 (Methanothermobacter thermautotrophicus (strain ATCC 29096 / DSM 1053 / JCM 10044 / NBRC 100330 / Delta H) (Methanobacterium thermoautotrophicum)).